We begin with the raw amino-acid sequence, 436 residues long: N-lysine methyltransferase SMYD2 (436 aa).

The SET domain maps to 10–244 (GGLERFASPG…PGEEVFTSYI (235 aa)). 20–22 (KGR) lines the S-adenosyl-L-methionine pocket. Zn(2+)-binding residues include Cys-55, Cys-58, Cys-68, Cys-71, Cys-77, Cys-81, His-89, and Cys-93. An MYND-type zinc finger spans residues 55–93 (CDGCFARKEGLSKCGRCKQAFYCNVECQKEDWPMHKLEC). S-adenosyl-L-methionine is bound by residues His-140, 209–210 (NH), and 261–263 (YFF).

It belongs to the class V-like SAM-binding methyltransferase superfamily.

It localises to the cytoplasm. Its subcellular location is the cytosol. The protein localises to the nucleus. The catalysed reaction is L-lysyl(4)-[histone H3] + 3 S-adenosyl-L-methionine = N(6),N(6),N(6)-trimethyl-L-lysyl(4)-[histone H3] + 3 S-adenosyl-L-homocysteine + 3 H(+). The enzyme catalyses L-lysyl-[protein] + S-adenosyl-L-methionine = N(6)-methyl-L-lysyl-[protein] + S-adenosyl-L-homocysteine + H(+). Functionally, protein-lysine N-methyltransferase that methylates both histones and non-histone proteins, including p53/TP53 and RB1. Specifically trimethylates histone H3 'Lys-4' (H3K4me3) in vivo. The activity requires interaction with HSP90alpha. Shows even higher methyltransferase activity on p53/TP53. Monomethylates 'Lys-370' of p53/TP53, leading to decreased DNA-binding activity and subsequent transcriptional regulation activity of p53/TP53. Monomethylates RB1 at 'Lys-860'. The sequence is that of N-lysine methyltransferase SMYD2 (SMYD2) from Gallus gallus (Chicken).